An 810-amino-acid chain; its full sequence is Transmembrane channel-like protein 6 (810 aa).

Positions 1-26 (MAQSLALALDVPETTGDEGLEPSPYE) are disordered. Residues 1–205 (MAQSLALALD…GAFSCCSRLR (205 aa)) lie on the Lumenal side of the membrane. Positions 15–26 (TGDEGLEPSPYE) are enriched in acidic residues. Residue Thr-88 is modified to Phosphothreonine. Arg-93 is subject to Omega-N-methylarginine. The N-linked (GlcNAc...) asparagine glycan is linked to Asn-102. Thr-104 carries the post-translational modification Phosphothreonine. Ser-136 is subject to Phosphoserine. The helical transmembrane segment at 206–226 (YTCMLALHSLGLALLSGLYAA) threads the bilayer. The Cytoplasmic portion of the chain corresponds to 227 to 253 (RPWRYALKQIGGQFGSSVLSYFLFLKT). The helical transmembrane segment at 254–274 (LLAFNALMLLPLLAFLVGVQA) threads the bilayer. Over 275–338 (AFPPDPAGPV…PRLGSLPYNM (64 aa)) the chain is Lumenal. Asn-311 carries an N-linked (GlcNAc...) asparagine glycan. The chain crosses the membrane as a helical span at residues 339–359 (PLAYLFTMGATFFLTCIILVY). Topologically, residues 360–429 (SMSHSFGESY…PRSVCGQLRQ (70 aa)) are cytoplasmic. A helical transmembrane segment spans residues 430–450 (VVVLGLGWLLCLGSTMGCTVA). The Lumenal portion of the chain corresponds to 451–468 (VLTFSEVMIQRPASGGQG). The helical transmembrane segment at 469–489 (VEALALPLVVSVLNLGASYLF) threads the bilayer. Residues 490–504 (RGLATLERHDSPVLE) are Cytoplasmic-facing. The chain crosses the membrane as a helical span at residues 505 to 525 (VYMAICRNLILKMAVLGVLCY). The Lumenal segment spans residues 526–552 (HWLGRRVATLQGQCWEDFVGQELYRFM). Residues 553–573 (VVDFIFMLLDSLFGELVWRLI) traverse the membrane as a helical segment. At 574–603 (SEKKLKRGQKPEFDIARNVLDLIYGQTLTW) the chain is on the cytoplasmic side. Residues 604-624 (LGVLFSPLLPAVQILRLLFLF) traverse the membrane as a helical segment. The Lumenal portion of the chain corresponds to 625 to 649 (HIKKASLMANCQAPRRPWLASHMST). A helical transmembrane segment spans residues 650-670 (VFLTLLCFPSFLGAAVFLCYA). Residues 671 to 721 (VWQVRPSSTCGPFRTLNTMYEAGTVWVRRLEHAGSGASWLPWLHHFLVENT) are Cytoplasmic-facing. The helical transmembrane segment at 722 to 742 (FFLFLASALLLAVIYFNIQVV) threads the bilayer. Residues 743–810 (KGQRKVICLL…QKEPCNPRSP (68 aa)) are Lumenal-facing. The segment at 775–810 (EEEGRSRPGRTQDATEPPAWHEDGGDQKEPCNPRSP) is disordered. Positions 793 to 810 (AWHEDGGDQKEPCNPRSP) are enriched in basic and acidic residues.

This sequence belongs to the TMC family. As to quaternary structure, interacts with TMC8. Interacts and forms a complex with TMC8 and CIB1; the interaction stabilizes each component of the complex. Interacts and forms a complex with TMC8 and SLC30A1/ZNT1; the interaction regulates zinc transport into the ER. As to expression, widely expressed. Highly expressed in thymus, lung and spleen. Expressed in lymphocytes and peripheral lymphocytes. Expressed in small and medium dorsal root ganglion (DRG) neurons.

It localises to the endoplasmic reticulum membrane. In terms of biological role, acts as a regulatory protein involved in the regulation of numerous cellular processes. Together with its homolog TMC8/EVER2, forms a complex with calcium-binding protein CIB1 in lymphocytes and keratynocytes where TMC6 and TMC8 stabilize CIB1 and reciprocally. Together with TMC8, also forms a complex with and activates zinc transporter ZNT1 at the ER membrane of keratynocytes, thereby facilitating zinc uptake into the ER. Down-regulates the activity of transcription factors induced by zinc and cytokines. Also plays a role in thermal sensation by inhibiting the M-channel (KCNQ2-KCNQ3 channel) current in primary sensory neurons. The protein is Transmembrane channel-like protein 6 of Mus musculus (Mouse).